Here is a 95-residue protein sequence, read N- to C-terminus: Co-chaperonin GroES (95 aa).

This sequence belongs to the GroES chaperonin family. As to quaternary structure, heptamer of 7 subunits arranged in a ring. Interacts with the chaperonin GroEL.

It is found in the cytoplasm. Its function is as follows. Together with the chaperonin GroEL, plays an essential role in assisting protein folding. The GroEL-GroES system forms a nano-cage that allows encapsulation of the non-native substrate proteins and provides a physical environment optimized to promote and accelerate protein folding. GroES binds to the apical surface of the GroEL ring, thereby capping the opening of the GroEL channel. The protein is Co-chaperonin GroES of Zymomonas mobilis subsp. mobilis (strain ATCC 31821 / ZM4 / CP4).